Here is a 165-residue protein sequence, read N- to C-terminus: Phosphopantetheine adenylyltransferase (165 aa).

Substrate is bound at residue S11. Residues 11–12 (SF) and H19 each bind ATP. Substrate is bound by residues K43, T76, and R90. Residues 91–93 (GIR), E101, and 126–132 (FSFISSS) contribute to the ATP site.

The protein belongs to the bacterial CoaD family. Homohexamer. It depends on Mg(2+) as a cofactor.

The protein resides in the cytoplasm. The catalysed reaction is (R)-4'-phosphopantetheine + ATP + H(+) = 3'-dephospho-CoA + diphosphate. It participates in cofactor biosynthesis; coenzyme A biosynthesis; CoA from (R)-pantothenate: step 4/5. Its function is as follows. Reversibly transfers an adenylyl group from ATP to 4'-phosphopantetheine, yielding dephospho-CoA (dPCoA) and pyrophosphate. The sequence is that of Phosphopantetheine adenylyltransferase from Latilactobacillus sakei subsp. sakei (strain 23K) (Lactobacillus sakei subsp. sakei).